Reading from the N-terminus, the 266-residue chain is Undecaprenyl-diphosphatase (266 aa).

Transmembrane regions (helical) follow at residues 4-24, 41-61, 79-99, 108-128, 143-163, 184-204, 220-240, and 243-263; these read LATIILLGIIEGLTEFLPVSS, GSAAFKIAIQLGAILAVLVAY, AVAFTRNILIGFLPAMLVGAV, LESPATVAVALLVGGIAILAI, MPLRTAIAIGAVQCIAMIPGV, AEFSFFLAVPTMMGATAYSLW, IGLFVAFLVALVVVKAFVAIV, and FGFAPFAWYRIIVGGGALLWL.

The protein belongs to the UppP family.

It localises to the cell inner membrane. It catalyses the reaction di-trans,octa-cis-undecaprenyl diphosphate + H2O = di-trans,octa-cis-undecaprenyl phosphate + phosphate + H(+). In terms of biological role, catalyzes the dephosphorylation of undecaprenyl diphosphate (UPP). Confers resistance to bacitracin. The protein is Undecaprenyl-diphosphatase of Sphingopyxis alaskensis (strain DSM 13593 / LMG 18877 / RB2256) (Sphingomonas alaskensis).